Consider the following 507-residue polypeptide: Cytochrome P450 monooxygenase cloA (507 aa).

A helical transmembrane segment spans residues 15-35 (WTWILLTTCIALISPLVLKGI). The N-linked (GlcNAc...) asparagine glycan is linked to asparagine 247. Residue cysteine 450 coordinates heme.

It belongs to the cytochrome P450 family. Requires heme as cofactor.

It is found in the membrane. It participates in alkaloid biosynthesis; ergot alkaloid biosynthesis. Cytochrome P450 monooxygenase; part of the gene cluster that mediates the biosynthesis of fungal ergot alkaloid. DmaW catalyzes the first step of ergot alkaloid biosynthesis by condensing dimethylallyl diphosphate (DMAP) and tryptophan to form 4-dimethylallyl-L-tryptophan. The second step is catalyzed by the methyltransferase easF that methylates 4-dimethylallyl-L-tryptophan in the presence of S-adenosyl-L-methionine, resulting in the formation of 4-dimethylallyl-L-abrine. The catalase easC and the FAD-dependent oxidoreductase easE then transform 4-dimethylallyl-L-abrine to chanoclavine-I which is further oxidized by easD in the presence of NAD(+), resulting in the formation of chanoclavine-I aldehyde. Agroclavine dehydrogenase easG then mediates the conversion of chanoclavine-I aldehyde to agroclavine via a non-enzymatic adduct reaction: the substrate is an iminium intermediate that is formed spontaneously from chanoclavine-I aldehyde in the presence of glutathione. The presence of easA is not required to complete this reaction. Further conversion of agroclavine to paspalic acid is a two-step process involving oxidation of agroclavine to elymoclavine and of elymoclavine to paspalic acid, the second step being performed by the elymoclavine oxidase cloA. Paspalic acid is then further converted to D-lysergic acid. Ergopeptines are assembled from D-lysergic acid and three different amino acids by the D-lysergyl-peptide-synthetases composed each of a monomudular and a trimodular nonribosomal peptide synthetase subunit. LpsB and lpsC encode the monomodular subunits responsible for D-lysergic acid activation and incorporation into the ergopeptine backbone. LpsA1 and A2 subunits encode the trimodular nonribosomal peptide synthetase assembling the tripeptide portion of ergopeptines. LpsA1 is responsible for formation of the major ergopeptine, ergotamine, and lpsA2 for alpha-ergocryptine, the minor ergopeptine of the total alkaloid mixture elaborated by C.purpurea. D-lysergyl-tripeptides are assembled by the nonribosomal peptide synthetases and released as N-(D-lysergyl-aminoacyl)-lactams. Cyclolization of the D-lysergyl-tripeptides is performed by the Fe(2+)/2-ketoglutarate-dependent dioxygenase easH which introduces a hydroxyl group into N-(D-lysergyl-aminoacyl)-lactam at alpha-C of the aminoacyl residue followed by spontaneous condensation with the terminal lactam carbonyl group. This is Cytochrome P450 monooxygenase cloA from Claviceps purpurea (strain 20.1) (Ergot fungus).